Consider the following 99-residue polypeptide: Photosystem II reaction center Psb28 protein (99 aa).

It belongs to the Psb28 family. As to quaternary structure, part of the photosystem II complex.

It is found in the cell inner membrane. The polypeptide is Photosystem II reaction center Psb28 protein (Gloeobacter violaceus (strain ATCC 29082 / PCC 7421)).